We begin with the raw amino-acid sequence, 488 residues long: MGDEPLLQKVKIQEDIESVPLLQKVKIQEDIESVKGIRVNNDGEEDGPVTLILLFTTFTALCGTFSYGTAAGFTSPAQTGIMAGLNLSLAEFSFFGAVLTIGGLVGAAMSGKLADVFGRRGALGVSNSFCMAGWLMIAFSQATWSLDIGRLFLGVAAGVASYVVPVYIVEIAPKKVRGTFSAINSLVMCASVAVTYLLGSVISWQKLALISTVPCVFEFVGLFFIPESPRWLSRNGRVKESEVSLQRLRGNNTDITKEAAEIKKYMDNLQEFKEDGFFDLFNPRYSRVVTVGIGLLVLQQLGGLSGYTFYLSSIFKKSGFPNNVGVMMASVVQSVTSVLGIVIVDKYGRRSLLTVATIMMCLGSLITGLSFLFQSYGLLEHYTPISTFMGVLVFLTSITIGIGGIPWVMISEMTPINIKGSAGTLCNLTSWSSNWFVSYTFNFLFQWSSSGVFFIYTMISGVGILFVMKMVPETRGRSLEEIQAAITR.

A run of 12 helical transmembrane segments spans residues 51 to 71 (LILLFTTFTALCGTFSYGTAA), 89 to 109 (LAEFSFFGAVLTIGGLVGAAM), 116 to 138 (VFGRRGALGVSNSFCMAGWLMIA), 151 to 171 (LFLGVAAGVASYVVPVYIVEI), 182 to 202 (AINSLVMCASVAVTYLLGSVI), 207 to 227 (LALISTVPCVFEFVGLFFIPE), 291 to 311 (VGIGLLVLQQLGGLSGYTFYL), 324 to 344 (VGVMMASVVQSVTSVLGIVIV), 353 to 373 (LTVATIMMCLGSLITGLSFLF), 390 to 410 (GVLVFLTSITIGIGGIPWVMI), 423 to 445 (GTLCNLTSWSSNWFVSYTFNFLF), and 451 to 471 (GVFFIYTMISGVGILFVMKMV).

It belongs to the major facilitator superfamily. Sugar transporter (TC 2.A.1.1) family.

It localises to the membrane. Sugar transporter. In Arabidopsis thaliana (Mouse-ear cress), this protein is Putative sugar transporter ERD6-like 13.